An 866-amino-acid chain; its full sequence is MAYHPVYNETMSMGGGSSNEFGQWLDKQLVPFDTSSGSLRVELLHGNLDIWVKEAKHLPNMDGFHNTLVGGMFFGLGRRNHKVDGENSSKITSDPYVTVSISGAVIGRTFVISNSENPVWMQHFDVPVAHSAAKVHFVVKDSDIIGSQIIGAVEIPTEQLCSGNRIEGLFPILNSRGKPCKQGAVLSLSIQYIPMERMRLYQKGVGFGVECVGVPGTYFPLRKGGRVTLYQDAHVDDGTLPSVHLDGGIQYRHGKCWEDMADAIRRARRLIYITGWSVFHPVRLVRRNNDPTQGTLGELLKVKSQEGVRVLVLVWDDPTSRSLLGFSTKGLMNTSDEETRRFFKHSSVQVLLCPRYGGKGHSFIKKSEVETIYTHHQKTMIVDAEAAQNRRKIVAFVGGLDLCNGRFDTPKHPLFRTLKTIHKDDFHNPNFVTTADDGPREPWHDLHSKIDGPAAYDVLANFEERWMKASKPRGIGRLRTSSDDSLLRLDRIPDIMGLSEASSANDNDPESWHVQVFRSIDSSSVKGFPKDPKEATGRNLLCGKNILIDMSIHAAYVKAIRSAQHFIYIENQYFLGSSFNWDSNKNLGANNLIPMEIALKIANKIRAREKFAAYIVIPMWPEGAPTSNPIQRILYWQHKTMQMMYQTIYKALVEVGLDGQLEPQDFLNFFCLGTREVGTREVPDGTVSVYNSPRKPPQLNAAQVQALKSRRFMIYVHSKGMVVDDEFVLIGSANINQRSLEGTRDTEIAMGGYQPHHSWAKKGSRPRGQIFGYRMSLWAEHLGFLEQEFEEPENMECVRRVRQLSELNWRQYAAEEVTEMPGHLLKYPVQVDRTGKVSSLPGYETFPDLGGKIIGSFLVVEENLTI.

The C2 domain maps to 31-170 (PFDTSSGSLR…CSGNRIEGLF (140 aa)). A Ca(2+)-binding site is contributed by D232. The PLD phosphodiesterase 1 domain maps to 371–406 (TIYTHHQKTMIVDAEAAQNRRKIVAFVGGLDLCNGR). Active-site residues include H376, K378, and D383. H376 is an a 1,2-diacyl-sn-glycero-3-phosphate binding site. The Ca(2+) site is built by H412 and H444. Residue Q572 coordinates a 1,2-diacyl-sn-glycero-3-phosphate. S692 is modified (phosphoserine). The PLD phosphodiesterase 2 domain maps to 712–739 (FMIYVHSKGMVVDDEFVLIGSANINQRS). Catalysis depends on residues H717, K719, and D724. Residue H717 participates in a 1,2-diacyl-sn-glycero-3-phosphate binding. E780 contacts Ca(2+).

Belongs to the phospholipase D family. C2-PLD subfamily. The cofactor is Ca(2+). Highly expressed in inflorescences and old leaves, moderately in stems, roots, siliques and young leaves and low in flowers.

It is found in the cytoplasm. Its subcellular location is the membrane. The enzyme catalyses a 1,2-diacyl-sn-glycero-3-phosphocholine + H2O = a 1,2-diacyl-sn-glycero-3-phosphate + choline + H(+). Its activity is regulated as follows. Inhibited by neomycin. Functionally, hydrolyzes glycerol-phospholipids at the terminal phosphodiesteric bond to generate phosphatidic acids (PA). Plays an important role in various cellular processes, including phytohormone action, vesicular trafficking, secretion, cytoskeletal arrangement, meiosis, tumor promotion, pathogenesis, membrane deterioration and senescence. Can use phosphatidylserine but prefers ethanolamine-containing lipids as substrates. The protein is Phospholipase D gamma 3 of Arabidopsis thaliana (Mouse-ear cress).